The sequence spans 71 residues: Transcription modulator YdgT (71 aa).

The protein belongs to the Hha/YmoA/Cnu family. As to quaternary structure, forms complexes with both H-NS and StpA.

In terms of biological role, binds to H-NS and modified the range of genes it silences; H-NS alonge silences core gene while the H-NS-Hha complex (and presumably also H-NS-YdgT) silences genes acquired by horizontal gene transfer. Plays a role silencing virulence factors in the absence of factors that induce pathogenicity. The complex formed with H-NS binds to the specific 26-bp cnb site in the origin of replication oriC. The protein is Transcription modulator YdgT (ydgT) of Salmonella choleraesuis (strain SC-B67).